We begin with the raw amino-acid sequence, 232 residues long: 5'-methylthioadenosine/S-adenosylhomocysteine nucleosidase (232 aa).

The Proton acceptor role is filled by Glu-12. Substrate is bound by residues Gly-78, Ile-152, and 173-174 (ME). Residue Asp-197 is the Proton donor of the active site.

It belongs to the PNP/UDP phosphorylase family. MtnN subfamily. In terms of assembly, homodimer.

The enzyme catalyses S-adenosyl-L-homocysteine + H2O = S-(5-deoxy-D-ribos-5-yl)-L-homocysteine + adenine. It carries out the reaction S-methyl-5'-thioadenosine + H2O = 5-(methylsulfanyl)-D-ribose + adenine. The catalysed reaction is 5'-deoxyadenosine + H2O = 5-deoxy-D-ribose + adenine. Its pathway is amino-acid biosynthesis; L-methionine biosynthesis via salvage pathway; S-methyl-5-thio-alpha-D-ribose 1-phosphate from S-methyl-5'-thioadenosine (hydrolase route): step 1/2. In terms of biological role, catalyzes the irreversible cleavage of the glycosidic bond in both 5'-methylthioadenosine (MTA) and S-adenosylhomocysteine (SAH/AdoHcy) to adenine and the corresponding thioribose, 5'-methylthioribose and S-ribosylhomocysteine, respectively. Also cleaves 5'-deoxyadenosine, a toxic by-product of radical S-adenosylmethionine (SAM) enzymes, into 5-deoxyribose and adenine. Thus, is required for in vivo function of the radical SAM enzymes biotin synthase and lipoic acid synthase, that are inhibited by 5'-deoxyadenosine accumulation. The chain is 5'-methylthioadenosine/S-adenosylhomocysteine nucleosidase from Klebsiella pneumoniae subsp. pneumoniae (strain ATCC 700721 / MGH 78578).